A 303-amino-acid polypeptide reads, in one-letter code: UDP-N-acetylenolpyruvoylglucosamine reductase (303 aa).

The FAD-binding PCMH-type domain maps to 28-195; the sequence is KTGGPAQYLA…ISATFGLEPG (168 aa). The active site involves Arg-174. The Proton donor role is filled by Ser-224. Glu-294 is a catalytic residue.

The protein belongs to the MurB family. The cofactor is FAD.

It is found in the cytoplasm. It carries out the reaction UDP-N-acetyl-alpha-D-muramate + NADP(+) = UDP-N-acetyl-3-O-(1-carboxyvinyl)-alpha-D-glucosamine + NADPH + H(+). It functions in the pathway cell wall biogenesis; peptidoglycan biosynthesis. Functionally, cell wall formation. In Lactobacillus gasseri (strain ATCC 33323 / DSM 20243 / BCRC 14619 / CIP 102991 / JCM 1131 / KCTC 3163 / NCIMB 11718 / NCTC 13722 / AM63), this protein is UDP-N-acetylenolpyruvoylglucosamine reductase.